A 190-amino-acid chain; its full sequence is uncharacterized protein (190 aa).

Residues 1–16 are Cytoplasmic-facing; it reads MAILPEFISQTPPVTR. A helical membrane pass occupies residues 17–37; that stretch reads YIVLGTLFTTLAVNFGYVSDL. Residues 38–55 are Lumenal-facing; that stretch reads KIFFNWKLFLAKGEYWRA. The chain crosses the membrane as a helical span at residues 56 to 76; it reads ITTFLYVGPFGLELILYLSFL. Residues 77 to 98 lie on the Cytoplasmic side of the membrane; the sequence is LRFMSMLERSSPPPQTQSFLKT. Residues 99–119 form a helical membrane-spanning segment; sequence VLIVWFSLLVTSYFSYMPFAA. Residues 120–138 are Lumenal-facing; the sequence is SYFSFTMLYIWSWKHPLYR. Residues 139–159 traverse the membrane as a helical segment; that stretch reads ISILGLFDVKAPYVPWVMVLL. Over 160–163 the chain is Cytoplasmic; it reads RWLR. The helical transmembrane segment at 164–184 threads the bilayer; sequence TGIFPLLDLISALIGHVYFFV. At 185-190 the chain is on the lumenal side; the sequence is TDFSTV.

The protein belongs to the derlin family.

The protein localises to the endoplasmic reticulum membrane. This is an uncharacterized protein from Schizosaccharomyces pombe (strain 972 / ATCC 24843) (Fission yeast).